The chain runs to 263 residues: Small ribosomal subunit protein eS4 (263 aa).

Positions 42 to 104 (LPLIVFLRNR…TGEHFRLVYD (63 aa)) constitute an S4 RNA-binding domain.

This sequence belongs to the eukaryotic ribosomal protein eS4 family.

This Pongo pygmaeus (Bornean orangutan) protein is Small ribosomal subunit protein eS4 (RPS4Y1).